The primary structure comprises 437 residues: Mitochondrial distribution and morphology protein 12 (437 aa).

One can recognise an SMP-LTD domain in the interval 1–437; it reads MSIDINWRTA…VYPSFWTFLI (437 aa). The segment covering 73-85 has biased composition (acidic residues); the sequence is DDDADTSDVSEDL. Disordered stretches follow at residues 73–101, 187–274, and 354–384; these read DDDADTSDVSEDLLSEHSSQWDRTHSELN, SDSG…PPRM, and SEQQQESGGDDHRPRSGADSSAHTSQKRQGG. Over residues 91 to 101 the composition is skewed to basic and acidic residues; it reads SQWDRTHSELN. 2 stretches are compositionally biased toward polar residues: residues 215–240 and 371–381; these read DTSNSTSRPSTANTLPSHLSESNNLN and ADSSAHTSQKR.

It belongs to the MDM12 family. Component of the ER-mitochondria encounter structure (ERMES) or MDM complex, composed of mmm1, mdm10, mdm12 and mdm34. A mmm1 homodimer associates with one molecule of mdm12 on each side in a pairwise head-to-tail manner, and the SMP-LTD domains of mmm1 and mdm12 generate a continuous hydrophobic tunnel for phospholipid trafficking.

It localises to the mitochondrion outer membrane. The protein resides in the endoplasmic reticulum membrane. Component of the ERMES/MDM complex, which serves as a molecular tether to connect the endoplasmic reticulum (ER) and mitochondria. Components of this complex are involved in the control of mitochondrial shape and protein biogenesis, and function in nonvesicular lipid trafficking between the ER and mitochondria. Mdm12 is required for the interaction of the ER-resident membrane protein mmm1 and the outer mitochondrial membrane-resident beta-barrel protein mdm10. The mdm12-mmm1 subcomplex functions in the major beta-barrel assembly pathway that is responsible for biogenesis of all mitochondrial outer membrane beta-barrel proteins, and acts in a late step after the SAM complex. The mdm10-mdm12-mmm1 subcomplex further acts in the TOM40-specific pathway after the action of the mdm12-mmm1 complex. Essential for establishing and maintaining the structure of mitochondria and maintenance of mtDNA nucleoids. The sequence is that of Mitochondrial distribution and morphology protein 12 from Aspergillus clavatus (strain ATCC 1007 / CBS 513.65 / DSM 816 / NCTC 3887 / NRRL 1 / QM 1276 / 107).